A 141-amino-acid chain; its full sequence is VLSPADKSNVKGVFAKIGGQAEEYGADALERMFATYPQTKTYFPHFDLGKGSAQVKGHGKKVAAALVEAVNNIDDLAGALSKLSDLHAQKLRVDPVNFKLLGQCFLVVVATGNPALLTPEVHAPLDKFLCAVGTVLTAKYR.

Residues 1–141 enclose the Globin domain; the sequence is VLSPADKSNV…VGTVLTAKYR (141 aa). An O2-binding site is contributed by His58. His87 serves as a coordination point for heme b.

Belongs to the globin family. In terms of assembly, heterotetramer of two alpha chains and two beta chains. Red blood cells.

Its function is as follows. Involved in oxygen transport from the lung to the various peripheral tissues. The chain is Hemoglobin subunit alpha-A (HBAA) from Passer montanus (Eurasian tree sparrow).